The following is a 304-amino-acid chain: MSHLLTMSELSEVEISEILKDAEDFANGKESKTTEQTFVANLFFENSTRTRFSFEVAEKRLGLDVLNFSADASSVQKGETLYDTIRTLESIGTKAVVIRHEQDRYFDELKDQVNIPILNAGDGCGNHPTQCLLDLLTIKQEFGRFEGLKIAIVGDVRHSRVARSNAEALTKLGATIYFASPEEWKDEDNTFGTYKPLDELVPEVDVMMLLRVQHERHDHYETDIMKEYHEKHGLTVEREKRMKEGSIIMHPAPVNRDVEIASELVECERSRIFKQMENGVYVRMAVLKRALPNVLGGMKHELFV.

Residues Arg-49 and Thr-50 each coordinate carbamoyl phosphate. Lys-77 provides a ligand contact to L-aspartate. 3 residues coordinate carbamoyl phosphate: Arg-99, His-127, and Gln-130. The L-aspartate site is built by Arg-160 and Arg-211. Residues Ala-252 and Pro-253 each contribute to the carbamoyl phosphate site.

This sequence belongs to the aspartate/ornithine carbamoyltransferase superfamily. ATCase family. In terms of assembly, heterododecamer (2C3:3R2) of six catalytic PyrB chains organized as two trimers (C3), and six regulatory PyrI chains organized as three dimers (R2).

The enzyme catalyses carbamoyl phosphate + L-aspartate = N-carbamoyl-L-aspartate + phosphate + H(+). The protein operates within pyrimidine metabolism; UMP biosynthesis via de novo pathway; (S)-dihydroorotate from bicarbonate: step 2/3. Catalyzes the condensation of carbamoyl phosphate and aspartate to form carbamoyl aspartate and inorganic phosphate, the committed step in the de novo pyrimidine nucleotide biosynthesis pathway. This Bacillus cereus (strain ZK / E33L) protein is Aspartate carbamoyltransferase catalytic subunit.